Here is a 187-residue protein sequence, read N- to C-terminus: Threonylcarbamoyl-AMP synthase (187 aa).

Residues 3 to 187 (EVLPADVAEL…AKSGQVIRKG (185 aa)) form the YrdC-like domain.

Belongs to the SUA5 family. TsaC subfamily.

The protein localises to the cytoplasm. The catalysed reaction is L-threonine + hydrogencarbonate + ATP = L-threonylcarbamoyladenylate + diphosphate + H2O. Required for the formation of a threonylcarbamoyl group on adenosine at position 37 (t(6)A37) in tRNAs that read codons beginning with adenine. Catalyzes the conversion of L-threonine, HCO(3)(-)/CO(2) and ATP to give threonylcarbamoyl-AMP (TC-AMP) as the acyladenylate intermediate, with the release of diphosphate. This is Threonylcarbamoyl-AMP synthase from Shewanella halifaxensis (strain HAW-EB4).